The following is a 127-amino-acid chain: Protein SPIRAL1-like 4 (127 aa).

The disordered stretch occupies residues 1–127; the sequence is MGKARGVNSG…FGSGPCGSDK (127 aa). The span at 39-48 shows a compositional bias: low complexity; the sequence is TTTTTTTTTT. The residue at position 80 (S80) is a Phosphoserine. The span at 80–94 shows a compositional bias: polar residues; it reads SPNNYYRSDGQNCGN.

This sequence belongs to the SPIRAL1 family. In terms of tissue distribution, ubiquitous.

Acts redundantly with SPR1 in maintaining the cortical microtubules organization essential for anisotropic cell growth. This Arabidopsis thaliana (Mouse-ear cress) protein is Protein SPIRAL1-like 4 (SP1L4).